Reading from the N-terminus, the 879-residue chain is MTTETGPDSEVKKAQEETPQQPEAAAAVTTPVTPAGHSHPETNSNEKHLTQQDTRPAEQSLDMDDKDYSEADGLSERTTPSKAQKSPQKIAKKFKSAICRVTLLDASEYECEVEKHGRGQVLFDLVCEHLNLLEKDYFGLTFCDADSQKNWLDPSKEIKKQIRSSPWNFAFTVKFYPPDPAQLTEDITRYYLCLQLRADIITGRLPCSFVTHALLGSYAVQAELGDYDAEEHVGNYVSELRFAPNQTRELEERIMELHKTYRGMTPGEAEIHFLENAKKLSMYGVDLHHAKDSEGIDIMLGVCANGLLIYRDRLRINRFAWPKILKISYKRSNFYIKIRPGEYEQFESTIGFKLPNHRSAKRLWKVCIEHHTFFRLVSPEPPPKGFLVMGSKFRYSGRTQAQTRQASALIDRPAPFFERSSSKRYTMSRSLDGAEFSRPASVSENHDAGPEGDKREDDAESGGRRSEAEEGEVRTPTKIKELKPEQETTPRHKQEFLDKPEDVLLKHQASINELKRTLKEPNSKLIHRDRDWDRERRLPSSPASPSPKGTPEKASERAGLREGSEEKVKPPRPRAPESDMGDEDQDQERDAVFLKDNHLAIERKCSSITVSSTSSLEAEVDFTVIGDYHGGAFEDFSRSLPELDRDKSDSETEGLVFAQDLKGPSSQEDESGGLEDSPDRGACSTPEMPQFESVKAETMTVSSLAIRKKIEPEAMLQSRVSAADSTQVDGGTPMVKDFMTTPPCITTETISTTMENSLKSGKGAAAMIPGPQTVATEIRSLSPIIGKDVLTSTYGATAETLSTSTTTHVTKTVKGGFSETRIEKRIIITGDEDVDQDQALALAIKEAKLQHPDMLVTKAVVYRETDPSPEERDKKPQES.

Residues 1 to 88 (MTTETGPDSE…TPSKAQKSPQ (88 aa)) are disordered. Positions 17–35 (ETPQQPEAAAAVTTPVTPA) are enriched in low complexity. Thr-30 carries the post-translational modification Phosphothreonine. A compositionally biased stretch (basic and acidic residues) spans 38 to 50 (SHPETNSNEKHLT). Ser-75 carries the phosphoserine modification. The segment covering 76–87 (ERTTPSKAQKSP) has biased composition (polar residues). Position 79 is a phosphothreonine (Thr-79). Residues 97 to 378 (AICRVTLLDA…EHHTFFRLVS (282 aa)) form the FERM domain. Tyr-343 is modified (phosphotyrosine). Phosphoserine occurs at positions 378, 430, 437, 461, and 466. Positions 381–482 (PPPKGFLVMG…VRTPTKIKEL (102 aa)) are hydrophilic. The segment at 428–501 (SRSLDGAEFS…HKQEFLDKPE (74 aa)) is disordered. A compositionally biased stretch (basic and acidic residues) spans 444-501 (ENHDAGPEGDKREDDAESGGRRSEAEEGEVRTPTKIKELKPEQETTPRHKQEFLDKPE). Thr-475 bears the Phosphothreonine mark. A spectrin--actin-binding region spans residues 483-541 (KPEQETTPRHKQEFLDKPEDVLLKHQASINELKRTLKEPNSKLIHRDRDWDRERRLPSS). Ser-510 carries the phosphoserine modification. Basic and acidic residues predominate over residues 514 to 538 (LKRTLKEPNSKLIHRDRDWDRERRL). The disordered stretch occupies residues 514–594 (LKRTLKEPNS…QDQERDAVFL (81 aa)). Residues Ser-540, Ser-541, Ser-544, and Ser-546 each carry the phosphoserine modification. Position 550 is a phosphothreonine (Thr-550). The segment covering 550 to 577 (TPEKASERAGLREGSEEKVKPPRPRAPE) has biased composition (basic and acidic residues). A phosphoserine mark is found at Ser-564, Ser-578, Ser-639, Ser-648, Ser-650, Ser-665, Ser-666, Ser-671, Ser-677, and Ser-684. The segment at 657 to 696 (FAQDLKGPSSQEDESGGLEDSPDRGACSTPEMPQFESVKA) is disordered. Position 685 is a phosphothreonine (Thr-685). Ser-721, Ser-782, and Ser-868 each carry phosphoserine. Residues 743–879 (PCITTETIST…EERDKKPQES (137 aa)) are C-terminal (CTD).

Interacts with AGAP2. In terms of tissue distribution, highest expression in brain, also present in kidney, olfactory epithelium, retina, sensory ganglia, gastrointestinal tract (only enteric neurons) and lung.

The protein localises to the cytoplasm. The protein resides in the cytoskeleton. Functionally, may function to confer stability and plasticity to neuronal membrane via multiple interactions, including the spectrin-actin-based cytoskeleton, integral membrane channels and membrane-associated guanylate kinases. This Mus musculus (Mouse) protein is Band 4.1-like protein 1.